The primary structure comprises 224 residues: 25 kDa integral membrane protein (224 aa).

Residues 1–12 (MKLSFTKVSLTN) are Cytoplasmic-facing. Residues 13–33 (ILILFNCLFIIFSMIVLTFGV) form a helical membrane-spanning segment. The Extracellular portion of the chain corresponds to 34-52 (IPQIYLLKFANILHGVRPS). A helical transmembrane segment spans residues 53 to 73 (IFPIVCFTGSFVIIVACVGII). At 74-80 (GLMKGGK) the chain is on the cytoplasmic side. Residues 81-101 (CLLTMHIIALIIATIIDISTA) form a helical membrane-spanning segment. Residues 102-189 (TLSAIKQNEF…LNKYVRYYID (88 aa)) lie on the Extracellular side of the membrane. Residue Asn120 is glycosylated (N-linked (GlcNAc...) asparagine). The helical transmembrane segment at 190–210 (ILIYLCFIFGFIKLIYSLFTF) threads the bilayer. Topologically, residues 211–224 (TQRQRIFSEKTPVA) are cytoplasmic.

Belongs to the tetraspanin (TM4SF) family.

The protein resides in the membrane. The protein is 25 kDa integral membrane protein of Schistosoma japonicum (Blood fluke).